A 410-amino-acid polypeptide reads, in one-letter code: Phosphoglycerate kinase (410 aa).

Residues 22-24 (DIN), R39, 62-65 (HQSR), R119, and R159 contribute to the substrate site. ATP is bound by residues E332 and 358–361 (GGHL).

This sequence belongs to the phosphoglycerate kinase family. In terms of assembly, homodimer.

Its subcellular location is the cytoplasm. It catalyses the reaction (2R)-3-phosphoglycerate + ATP = (2R)-3-phospho-glyceroyl phosphate + ADP. It participates in carbohydrate degradation; glycolysis; pyruvate from D-glyceraldehyde 3-phosphate: step 2/5. This chain is Phosphoglycerate kinase (pgk), found in Methanothermus fervidus (strain ATCC 43054 / DSM 2088 / JCM 10308 / V24 S).